Consider the following 369-residue polypeptide: 2-aminoethylphosphonate--pyruvate transaminase (369 aa).

Residue lysine 193 is modified to N6-(pyridoxal phosphate)lysine.

Belongs to the class-V pyridoxal-phosphate-dependent aminotransferase family. PhnW subfamily. Homodimer. Requires pyridoxal 5'-phosphate as cofactor.

It carries out the reaction (2-aminoethyl)phosphonate + pyruvate = phosphonoacetaldehyde + L-alanine. Its function is as follows. Involved in phosphonate degradation. This Pseudomonas fluorescens (strain ATCC BAA-477 / NRRL B-23932 / Pf-5) protein is 2-aminoethylphosphonate--pyruvate transaminase.